The following is a 212-amino-acid chain: Ion-translocating oxidoreductase complex subunit G (212 aa).

The chain crosses the membrane as a helical span at residues 9 to 29 (GLLLALFALLCTGLVAVVNQQ). FMN phosphoryl threonine is present on threonine 176.

This sequence belongs to the RnfG family. In terms of assembly, the complex is composed of six subunits: RnfA, RnfB, RnfC, RnfD, RnfE and RnfG. Requires FMN as cofactor.

It is found in the cell inner membrane. Functionally, part of a membrane-bound complex that couples electron transfer with translocation of ions across the membrane. The sequence is that of Ion-translocating oxidoreductase complex subunit G from Shewanella oneidensis (strain ATCC 700550 / JCM 31522 / CIP 106686 / LMG 19005 / NCIMB 14063 / MR-1).